We begin with the raw amino-acid sequence, 392 residues long: Phosphopentomutase (392 aa).

Asp13, Asp286, His291, Asp327, His328, and His339 together coordinate Mn(2+).

This sequence belongs to the phosphopentomutase family. Requires Mn(2+) as cofactor.

The protein localises to the cytoplasm. It carries out the reaction 2-deoxy-alpha-D-ribose 1-phosphate = 2-deoxy-D-ribose 5-phosphate. The catalysed reaction is alpha-D-ribose 1-phosphate = D-ribose 5-phosphate. The protein operates within carbohydrate degradation; 2-deoxy-D-ribose 1-phosphate degradation; D-glyceraldehyde 3-phosphate and acetaldehyde from 2-deoxy-alpha-D-ribose 1-phosphate: step 1/2. Functionally, isomerase that catalyzes the conversion of deoxy-ribose 1-phosphate (dRib-1-P) and ribose 1-phosphate (Rib-1-P) to deoxy-ribose 5-phosphate (dRib-5-P) and ribose 5-phosphate (Rib-5-P), respectively. The protein is Phosphopentomutase of Oceanobacillus iheyensis (strain DSM 14371 / CIP 107618 / JCM 11309 / KCTC 3954 / HTE831).